Consider the following 360-residue polypeptide: 3-dehydroquinate synthase (360 aa).

NAD(+) is bound by residues Asp71–Lys76, Gly105–Asp109, Thr129–Thr130, Lys142, Lys151, and Thr169–Thr172. Zn(2+) is bound by residues Glu184, His248, and His265.

The protein belongs to the sugar phosphate cyclases superfamily. Dehydroquinate synthase family. The cofactor is Co(2+). Requires Zn(2+) as cofactor. It depends on NAD(+) as a cofactor.

Its subcellular location is the cytoplasm. It catalyses the reaction 7-phospho-2-dehydro-3-deoxy-D-arabino-heptonate = 3-dehydroquinate + phosphate. Its pathway is metabolic intermediate biosynthesis; chorismate biosynthesis; chorismate from D-erythrose 4-phosphate and phosphoenolpyruvate: step 2/7. Catalyzes the conversion of 3-deoxy-D-arabino-heptulosonate 7-phosphate (DAHP) to dehydroquinate (DHQ). This is 3-dehydroquinate synthase from Coxiella burnetii (strain RSA 331 / Henzerling II).